Reading from the N-terminus, the 367-residue chain is Aflatoxin B1 aldehyde reductase member 2 (367 aa).

The transit peptide at 1 to 46 (MLRAVSRAVSRAAVRCAWRSGPSVARPLAMSRSPAPRAVSGAPLRP) directs the protein to the mitochondrion. The tract at residues 27-46 (PLAMSRSPAPRAVSGAPLRP) is disordered. Position 40 is a phosphoserine (Ser40). Residue Thr48 is modified to Phosphothreonine. Asp80 serves as a coordination point for NADP(+). Tyr85 acts as the Proton donor in catalysis. At Lys136 the chain carries N6-acetyllysine. His149 provides a ligand contact to substrate. NADP(+) is bound by residues 179–180 (SN), Gln205, 234–244 (NPLAGGLLTGK), and Arg258. Lys244 carries the N6-succinyllysine modification. Phosphoserine is present on Ser263. Substrate contacts are provided by Tyr268 and Arg271. Position 326 to 334 (326 to 334 (SSLEQLEQN)) interacts with NADP(+). Arg367 lines the substrate pocket.

Belongs to the aldo/keto reductase family. Aldo/keto reductase 2 subfamily. As to quaternary structure, homodimer. Heterodimer with AKR7A1.

The protein localises to the mitochondrion. It localises to the golgi apparatus. It is found in the golgi stack. The protein resides in the cytoplasm. It carries out the reaction 4-hydroxybutanoate + NADP(+) = succinate semialdehyde + NADPH + H(+). Functionally, catalyzes the NADPH-dependent reduction of succinic semialdehyde to gamma-hydroxybutyrate. May have an important role in producing the neuromodulator gamma-hydroxybutyrate (GHB). Has broad substrate specificity. Can reduce the dialdehyde protein-binding form of aflatoxin B1 (AFB1) to the non-binding AFB1 dialcohol. Acts as a 2-carboxybenzaldehyde reductase. The protein is Aflatoxin B1 aldehyde reductase member 2 (Akr7a2) of Rattus norvegicus (Rat).